Reading from the N-terminus, the 930-residue chain is Zn(2)-C6 fungal-type transcription factor FTF1c (930 aa).

Positions 137–164 (CIPCRRKKIRCSGEKPACEHCLRSYIPC) form a DNA-binding region, zn(2)-C6 fungal-type.

It is found in the nucleus. Functionally, zn(2)-C6 fungal-type transcription factor that has a role in the establishment of the fungus within the plant and/or the progress of the disease. Regulates the expression of virulence factors such as SIX1 and SIX6. This Fusarium oxysporum f. sp. lycopersici (strain 4287 / CBS 123668 / FGSC 9935 / NRRL 34936) (Fusarium vascular wilt of tomato) protein is Zn(2)-C6 fungal-type transcription factor FTF1c.